The chain runs to 147 residues: Small ribosomal subunit protein bS16m (147 aa).

This sequence belongs to the bacterial ribosomal protein bS16 family. In terms of assembly, component of the mitochondrial ribosome small subunit (28S) which comprises a 12S rRNA and about 30 distinct proteins.

The protein resides in the mitochondrion. The polypeptide is Small ribosomal subunit protein bS16m (mrps-16) (Caenorhabditis elegans).